The primary structure comprises 147 residues: Thyrotropin subunit beta (147 aa).

Residues 1–20 (MRVVLLASAVLCLLAGQVLS) form the signal peptide. Intrachain disulfides connect Cys-22–Cys-72, Cys-36–Cys-87, Cys-39–Cys-126, Cys-47–Cys-103, Cys-51–Cys-105, and Cys-108–Cys-115. Asn-43 carries an N-linked (GlcNAc...) asparagine glycan.

This sequence belongs to the glycoprotein hormones subunit beta family. Heterodimer of a common alpha chain and a unique beta chain which confers biological specificity to thyrotropin, lutropin, follitropin and gonadotropin.

The protein localises to the secreted. Functionally, indispensable for the control of thyroid structure and metabolism. May play some role in the biological processes of the immature fishes. This Anguilla anguilla (European freshwater eel) protein is Thyrotropin subunit beta (tshb).